Consider the following 235-residue polypeptide: Phosphoribosylaminoimidazole-succinocarboxamide synthase (235 aa).

The protein belongs to the SAICAR synthetase family.

It carries out the reaction 5-amino-1-(5-phospho-D-ribosyl)imidazole-4-carboxylate + L-aspartate + ATP = (2S)-2-[5-amino-1-(5-phospho-beta-D-ribosyl)imidazole-4-carboxamido]succinate + ADP + phosphate + 2 H(+). It participates in purine metabolism; IMP biosynthesis via de novo pathway; 5-amino-1-(5-phospho-D-ribosyl)imidazole-4-carboxamide from 5-amino-1-(5-phospho-D-ribosyl)imidazole-4-carboxylate: step 1/2. In Streptococcus mutans serotype c (strain ATCC 700610 / UA159), this protein is Phosphoribosylaminoimidazole-succinocarboxamide synthase.